The following is a 458-amino-acid chain: UDP-N-acetylmuramate--L-alanine ligase (458 aa).

Residue 112–118 (GTHGKTT) participates in ATP binding.

Belongs to the MurCDEF family.

The protein resides in the cytoplasm. The enzyme catalyses UDP-N-acetyl-alpha-D-muramate + L-alanine + ATP = UDP-N-acetyl-alpha-D-muramoyl-L-alanine + ADP + phosphate + H(+). It functions in the pathway cell wall biogenesis; peptidoglycan biosynthesis. Functionally, cell wall formation. The chain is UDP-N-acetylmuramate--L-alanine ligase from Geotalea daltonii (strain DSM 22248 / JCM 15807 / FRC-32) (Geobacter daltonii).